The chain runs to 431 residues: Histidine--tRNA ligase (431 aa).

Belongs to the class-II aminoacyl-tRNA synthetase family. Homodimer.

It is found in the cytoplasm. It catalyses the reaction tRNA(His) + L-histidine + ATP = L-histidyl-tRNA(His) + AMP + diphosphate + H(+). The polypeptide is Histidine--tRNA ligase (Neisseria meningitidis serogroup C / serotype 2a (strain ATCC 700532 / DSM 15464 / FAM18)).